The following is a 491-amino-acid chain: Cytochrome P450 monooxygenase olcB (491 aa).

A helical membrane pass occupies residues 5–27 (LLLSLSVCLLYVFITAFWNLYIH). Cysteine 435 provides a ligand contact to heme.

This sequence belongs to the cytochrome P450 family. Heme is required as a cofactor.

The protein localises to the membrane. It participates in secondary metabolite biosynthesis; terpenoid biosynthesis. In terms of biological role, cytochrome P450 monooxygenase; part of the gene cluster that mediates the biosynthesis of 15-deoxyoxalicine B. The first step of the pathway is the synthesis of nicotinyl-CoA from nicotinic acid by the nicotinic acid-CoA ligase olcI. Nicotinyl-CoA is then a substrate of polyketide synthase olcA to produce 4-hydroxy-6-(3-pyridinyl)-2H-pyran-2-one (HPPO) which is further prenylated by the polyprenyl transferase olcH to yield geranylgeranyl-HPPO. Geranylgeranyl pyrophosphate is provided by the cluster-specific geranylgeranyl pyrophosphate synthase olcC. The FAD-dependent monooxygenase olcE catalyzes the epoxidation of geranylgeranyl-HPPO and the terpene cyclase olcD catalyzes the cyclization of the terpenoid component, resulting in the formation of the tricyclic terpene moiety seen in predecaturin E. The cytochrome P450 monooxygenase then catalyzes the allylic oxidation of predecaturin E, which is followed by spirocylization with concomitant loss of one molecule of water to form decaturin E. Decaturin E is the substrate of the cytochrome P450 monooxygenase olcJ which hydroxylates it at the C-29 position to form decaturin F. The short-chain dehydrogenase/reductase olcF may catalyze the oxidation of decaturin F to generate the 29-hydroxyl-27-one intermediate, and subsequent hemiacetal formation probably leads to the formation of decaturin C. The dioxygenase olcK may be a peroxisomal enzyme that catalyzes the hydroxylation of decaturin C into decaturin A once decaturin C is shuttled into the peroxisome by the MFS transporter olcL. Finally the cytochrome P450 monooxygenase olcB catalyzes the oxidative rearrangement to yield 15-deoxyoxalicine B. In the absence of olcJ, decaturin E may be shunted to a pathway in which it is oxidized to a ketone, possibly by olcF, to form decaturin D, which undergoes further allylic oxidation to yield decaturin G. Moreover, in the absence of oclK or oclL, oclB can convert decaturin C into 15-deoxyoxalicine A. In Penicillium canescens, this protein is Cytochrome P450 monooxygenase olcB.